The chain runs to 217 residues: Putative 8-oxo-dGTP diphosphatase 3 (217 aa).

The 135-residue stretch at 30–164 folds into the Nudix hydrolase domain; sequence GRYGAAGLLL…PGFAASWQRL (135 aa). The tract at residues 67 to 92 is disordered; that stretch reads LPGGARDSHETPEQTAVRESSEEAGL. Positions 70, 85, 88, and 89 each coordinate Mg(2+). The short motif at 70–91 is the Nudix box element; it reads GARDSHETPEQTAVRESSEEAG.

The protein belongs to the Nudix hydrolase family. Requires Mg(2+) as cofactor. It depends on Mn(2+) as a cofactor.

The catalysed reaction is 8-oxo-dGTP + H2O = 8-oxo-dGMP + diphosphate + H(+). In terms of biological role, may be involved in the GO system responsible for removing an oxidatively damaged form of guanine (7,8-dihydro-8-oxoguanine, 8-oxo-dGTP) from DNA and the nucleotide pool. 8-oxo-dGTP is inserted opposite dA and dC residues of template DNA with almost equal efficiency thus leading to A.T to G.C transversions. MutT specifically degrades 8-oxo-dGTP to the monophosphate. The chain is Putative 8-oxo-dGTP diphosphatase 3 (mutT3) from Mycobacterium tuberculosis (strain CDC 1551 / Oshkosh).